A 180-amino-acid polypeptide reads, in one-letter code: MASSVMSSAAVATRGNGAQASMVAPFTGLKSTASFPVSRKQNLDITSIASNGGRVSCMQVWPPINMKKYETLSYLPDLSDEQLLSEIEYLLKNGWVPCLEFETEHGFVYRENHKSPGYYDGRYWTMWKLPMFGCTDATQVLAEVQEAKKAYPQAWVRIIGFDNVRQVQCISFIAYKPEGY.

A chloroplast-targeting transit peptide spans M1–S56.

It belongs to the RuBisCO small chain family. In terms of assembly, heterohexadecamer of 8 large and 8 small subunits. As to quaternary structure, (Microbial infection) Binds to tobamovirus movement protein; this interaction seems required for viral systemic movement.

The protein resides in the plastid. The protein localises to the chloroplast. It localises to the cell junction. Its subcellular location is the plasmodesma. RuBisCO catalyzes two reactions: the carboxylation of D-ribulose 1,5-bisphosphate, the primary event in carbon dioxide fixation, as well as the oxidative fragmentation of the pentose substrate. Both reactions occur simultaneously and in competition at the same active site. Although the small subunit is not catalytic it is essential for maximal activity. Involved in antiviral defenses. This chain is Ribulose bisphosphate carboxylase small subunit, chloroplastic 3, found in Solanum lycopersicum (Tomato).